Reading from the N-terminus, the 114-residue chain is MQQLIAEITKSQLKTDLPSFRPGDTLRVHVKVVEGTRERIQIFEGVVIKRRGGGISETFTVRKVSYGVGVERTFPIHTPRIAKIEVLRRGKVRRAKLYYLRNLRGKAARIKEIR.

It belongs to the bacterial ribosomal protein bL19 family.

Its function is as follows. This protein is located at the 30S-50S ribosomal subunit interface and may play a role in the structure and function of the aminoacyl-tRNA binding site. The protein is Large ribosomal subunit protein bL19 of Bacillus cytotoxicus (strain DSM 22905 / CIP 110041 / 391-98 / NVH 391-98).